A 385-amino-acid polypeptide reads, in one-letter code: Mitochondrial fission regulator 2 (385 aa).

An N-acetylserine modification is found at S2. S119 is modified (phosphoserine). The interval 195 to 268 is disordered; it reads SVDPDQLPGS…SHHSKSQRNK (74 aa). The segment covering 207–216 has biased composition (pro residues); the sequence is SPPPPPPLPP. Positions 231-257 are enriched in polar residues; it reads PGSNNICDSDNPATEMSKQNPAANKTN. Phosphoserine is present on residues S291 and S328. A disordered region spans residues 331–363; it reads KENRSWESSPFSSPETSRFGHHISQSEGQRTKE. Over residues 336–346 the composition is skewed to polar residues; that stretch reads WESSPFSSPET.

It belongs to the MTFR1 family.

Its subcellular location is the mitochondrion. Functionally, may play a role in mitochondrial aerobic respiration essentially in the testis. Can also promote mitochondrial fission. This chain is Mitochondrial fission regulator 2 (MTFR2), found in Homo sapiens (Human).